Here is a 107-residue protein sequence, read N- to C-terminus: Inner membrane protein YiaW (107 aa).

Residues 1–6 are Cytoplasmic-facing; the sequence is MFLDYF. A helical transmembrane segment spans residues 7 to 29; the sequence is ALGVLIFVFLVIFYGIIILHDIP. Topologically, residues 30-43 are periplasmic; the sequence is YLIAKKRNHPHADA. Residues 44 to 66 traverse the membrane as a helical segment; that stretch reads IHVAGWVSLFTLHVIWPFLWIWA. The Cytoplasmic segment spans residues 67–107; that stretch reads TLYRPERGWGMQSHDSSVMQLQQRIAGLEKQLADIKSSSAE.

To E.coli YibI.

The protein localises to the cell inner membrane. This chain is Inner membrane protein YiaW (yiaW), found in Escherichia coli O157:H7.